Consider the following 177-residue polypeptide: Transcriptional regulator MET31 (177 aa).

The segment at 95–117 adopts a C2H2-type zinc-finger fold; that stretch reads YSCAKCQLKFSRSSDLRRHEKVH.

In terms of assembly, interacts with MET4 and MET28.

The protein localises to the cytoplasm. It is found in the nucleus. Functionally, auxiliary transcriptional regulator of sulfur amino acid metabolism. Involved in the transcriptional activation of MET28. The protein is Transcriptional regulator MET31 (MET31) of Saccharomyces cerevisiae (strain ATCC 204508 / S288c) (Baker's yeast).